The sequence spans 209 residues: Kynurenine formamidase (209 aa).

Substrate is bound at residue Trp-20. Zn(2+) contacts are provided by His-50, His-54, and Asp-56. The active-site Proton donor/acceptor is the His-60. His-161 and Glu-173 together coordinate Zn(2+).

It belongs to the Cyclase 1 superfamily. KynB family. As to quaternary structure, homodimer. Requires Zn(2+) as cofactor.

The catalysed reaction is N-formyl-L-kynurenine + H2O = L-kynurenine + formate + H(+). The protein operates within amino-acid degradation; L-tryptophan degradation via kynurenine pathway; L-kynurenine from L-tryptophan: step 2/2. In terms of biological role, catalyzes the hydrolysis of N-formyl-L-kynurenine to L-kynurenine, the second step in the kynurenine pathway of tryptophan degradation. This Bacillus cereus (strain ZK / E33L) protein is Kynurenine formamidase.